A 227-amino-acid polypeptide reads, in one-letter code: PKHD-type hydroxylase Pden_4677 (227 aa).

Residues 78 to 178 form the Fe2OG dioxygenase domain; sequence HILPPMFNRY…RWASFFWAQS (101 aa). 3 residues coordinate Fe cation: histidine 96, aspartate 98, and histidine 159. Arginine 169 contacts 2-oxoglutarate.

It depends on Fe(2+) as a cofactor. L-ascorbate is required as a cofactor.

The polypeptide is PKHD-type hydroxylase Pden_4677 (Paracoccus denitrificans (strain Pd 1222)).